The following is a 155-amino-acid chain: Anaerobic ribonucleoside-triphosphate reductase-activating protein (155 aa).

Residues Cys-26, Cys-30, and Cys-33 each contribute to the [4Fe-4S] cluster site. Residues 32–34 (GCY) and Gly-74 each bind S-adenosyl-L-methionine.

It belongs to the organic radical-activating enzymes family. In terms of assembly, forms a tetramer composed of two NrdD and two NrdG subunits. [4Fe-4S] cluster is required as a cofactor.

Its subcellular location is the cytoplasm. The enzyme catalyses glycyl-[protein] + reduced [flavodoxin] + S-adenosyl-L-methionine = glycin-2-yl radical-[protein] + semiquinone [flavodoxin] + 5'-deoxyadenosine + L-methionine + H(+). Activation of anaerobic ribonucleoside-triphosphate reductase under anaerobic conditions by generation of an organic free radical, using S-adenosylmethionine and reduced flavodoxin as cosubstrates to produce 5'-deoxy-adenosine. This Vibrio cholerae serotype O1 (strain ATCC 39315 / El Tor Inaba N16961) protein is Anaerobic ribonucleoside-triphosphate reductase-activating protein (nrdG).